Here is a 688-residue protein sequence, read N- to C-terminus: Methionine--tRNA ligase (688 aa).

The short motif at 20 to 30 (PYANGSIHLGH) is the 'HIGH' region element. Cys151, Cys154, Cys164, and Cys167 together coordinate Zn(2+). Positions 337–341 (KMSKS) match the 'KMSKS' region motif. Position 340 (Lys340) interacts with ATP. The region spanning 587–688 (TFAQVDLRIA…EGAQPGMRVM (102 aa)) is the tRNA-binding domain.

It belongs to the class-I aminoacyl-tRNA synthetase family. MetG type 1 subfamily. As to quaternary structure, homodimer. Zn(2+) serves as cofactor.

The protein localises to the cytoplasm. It catalyses the reaction tRNA(Met) + L-methionine + ATP = L-methionyl-tRNA(Met) + AMP + diphosphate. In terms of biological role, is required not only for elongation of protein synthesis but also for the initiation of all mRNA translation through initiator tRNA(fMet) aminoacylation. The chain is Methionine--tRNA ligase from Vibrio parahaemolyticus serotype O3:K6 (strain RIMD 2210633).